The chain runs to 341 residues: Putative UPF0607 protein ENSP00000383144 (341 aa).

Disordered regions lie at residues 70-131 (RLPK…NPRP) and 218-279 (LMVG…PPAK). The span at 72–101 (PKTEVRAEEPKEATEVKDQVETQEQEDNKR) shows a compositional bias: basic and acidic residues. Positions 108–127 (EAASTSRPLETQGNLTSSWY) are enriched in polar residues. Residues 243 to 252 (AGHRSHKRKL) show a composition bias toward basic residues.

This sequence belongs to the UPF0607 family.

In Homo sapiens (Human), this protein is Putative UPF0607 protein ENSP00000383144.